The following is a 148-amino-acid chain: Large-conductance mechanosensitive channel (148 aa).

The next 3 membrane-spanning stretches (helical) occupy residues 21-41 (IDLA…DSVV), 45-65 (IMPL…KFLV), and 92-112 (GNFL…FIIV).

It belongs to the MscL family. As to quaternary structure, homopentamer.

The protein localises to the cell inner membrane. In terms of biological role, channel that opens in response to stretch forces in the membrane lipid bilayer. May participate in the regulation of osmotic pressure changes within the cell. The protein is Large-conductance mechanosensitive channel of Bordetella petrii (strain ATCC BAA-461 / DSM 12804 / CCUG 43448).